A 905-amino-acid chain; its full sequence is MKRLSSAAIREQFLRFFEERGHVRVPSSSLIPGNDPTLLFTNSGMVQFKDTFLGLEQRPYTRATTAQKCLRVSGKHNDLEEVGPSPRHHTFFEMLGNFSFGDYFKAEAIPMAWELLTKVFDLPVERLWFTVFEGDDEVPPDDEAAQLWVAAGADPERVLRFGRKDNFWVMADAGPCGPCSEITIFIGDDLKEMSAKGVNSDDPNYVEIWNNVFMQFERSTMQPLHRPSVDTGMGLERMAMVMQGVHSTYDTDLFIPLIERQLALLGADEPTYRAHVAPFRAVADHSRAVAFLIADGVLPGNTGRSYVLRRILRRAVYQGRTVGFEKPFLADVAAVVIEQMGAVYPELRERADFILETVDLEERQFLRTLSGGVSILKSVIERVRAVGGTVIPGDDAFTLKDTYGFPLDLTQKIAAEHGLTVDEAGYERRMEEQRARGRRAAQFKRAADAEAWADIDLPPTRFTGYLGVSGSGTVQALIVAGDQVAEAVAGQQVQIALDSTPFYAESGGQIGDTGVLIGPRGRARIDDVQRPVPGVIVHYGVVEEGAIAVYETVEAQVDSVRRAAIMRSHTATHLLHRALRDVLGEHAAQAGSLVAPDRLRFDFTHTRPVTPEQLREIERRVNAWIRADTPVAWQELPYQAALEAGAIALFGEKYGDVVRMVTIGCVNGNDALSPAAIAERQRAGFRMCSRELCGGTHVGRSGEIGLFRIVSESSVAAGVRRIEALTGAEAEQWVDAQIATLHNIAARVGAPPSQLGERIEALLAELKQRQRALDELHARQARSNLEGLLANVQAVGDIRFLAAQVEAPDTARLREMGDWLRDKLGSGVVVLAAVIDGKAQILAMATPDLAGRRIHAGNLVKALAPIVGGSGGGRPDMAQAGGREVAHIPDALEHVAAALAAQAGG.

Zn(2+) contacts are provided by H569, H573, C693, and H697.

The protein belongs to the class-II aminoacyl-tRNA synthetase family. Zn(2+) is required as a cofactor.

The protein localises to the cytoplasm. It catalyses the reaction tRNA(Ala) + L-alanine + ATP = L-alanyl-tRNA(Ala) + AMP + diphosphate. Its function is as follows. Catalyzes the attachment of alanine to tRNA(Ala) in a two-step reaction: alanine is first activated by ATP to form Ala-AMP and then transferred to the acceptor end of tRNA(Ala). Also edits incorrectly charged Ser-tRNA(Ala) and Gly-tRNA(Ala) via its editing domain. This chain is Alanine--tRNA ligase, found in Roseiflexus castenholzii (strain DSM 13941 / HLO8).